Consider the following 221-residue polypeptide: Ktr system potassium uptake protein C (221 aa).

The RCK N-terminal domain occupies 2-118 (KKEFAVIGLG…LSKIGADHIV (117 aa)). NAD(+) is bound by residues R12, 32–34 (DID), 52–53 (DS), 74–76 (IGE), 99–101 (KAQ), H105, and E121. An RCK C-terminal domain is found at 135-219 (NNVLDYLELS…ISRFEKRVLH (85 aa)).

It belongs to the KtrA potassium transport family. As to quaternary structure, homodimer, tetramer (dimer of homodimer) and octamer (tetramer of homodimer). Part of the KtrCD complex formed by an octameric catalytic ring of KtrC and a membrane associated dimer of KtrD forming a potassium channel.

It localises to the cell membrane. Its function is as follows. Catalytic subunit of the KtrCD potassium uptake transporter. The 2 major potassium transporter complexes KtrAB and KtrCD confer resistance to both suddenly imposed and prolonged osmotic stress. In Bacillus subtilis (strain 168), this protein is Ktr system potassium uptake protein C (ktrC).